An 808-amino-acid polypeptide reads, in one-letter code: Protein SEY1 (808 aa).

Residues 1–21 (MSSELSEGELSHTSSSSSFVP) form a disordered region. Residues 1–701 (MSSELSEGEL…KRSIVQHITQ (701 aa)) lie on the Cytoplasmic side of the membrane. The GB1/RHD3-type G domain occupies 57–286 (GNNYHIISVF…VGDELFKPEY (230 aa)). Residue 67-74 (GSQSTGKS) participates in GTP binding. Residues 702 to 722 (IPYYIYLVIVFLGWNEFMAII) form a helical membrane-spanning segment. Topologically, residues 723 to 725 (RNP) are lumenal. A helical transmembrane segment spans residues 726 to 746 (LLFSLALLLGASVYILYKLNL). Over 747–808 (LKPAIVVAQR…YSDNIELDDM (62 aa)) the chain is Cytoplasmic.

The protein belongs to the TRAFAC class dynamin-like GTPase superfamily. GB1/RHD3 GTPase family. RHD3 subfamily.

The protein localises to the endoplasmic reticulum membrane. Functionally, cooperates with the reticulon proteins and tubule-shaping DP1 family proteins to generate and maintain the structure of the tubular endoplasmic reticulum network. Has GTPase activity, which is required for its function in ER organization. In Candida tropicalis (strain ATCC MYA-3404 / T1) (Yeast), this protein is Protein SEY1.